We begin with the raw amino-acid sequence, 355 residues long: 6-aminohexanoate-oligomer endohydrolase (355 aa).

Threonine 267 (nucleophile) is an active-site residue.

This sequence belongs to the peptidase S58 family. In terms of assembly, heterotetramer composed of 4 alpha/beta heterodimers. Expressed as an inactive precursor that is cleaved autocatalytically at Asn266/Thr267 to generate an active enzyme composed of an alpha subunit and a beta subunit.

It catalyses the reaction [N-(6-aminohexanoyl)]n + H2O = [N-(6-aminohexanoyl)]n-x + [N-(6-aminohexanoyl)]x.. It functions in the pathway xenobiotic degradation; nylon-6 oligomer degradation. Involved in the degradation of nylon-6 oligomers. Degrades cyclic and linear oligomers of 6-aminohexanoate (Ahx) with a degree of polymerization greater than three by an endo-type mode. Cannot use Ahx cyclic dimer or the Ahx linear dimer. The polypeptide is 6-aminohexanoate-oligomer endohydrolase (Kocuria sp. (strain KY2)).